The following is a 668-amino-acid chain: uncharacterized protein (668 aa).

A run of 9 helical transmembrane segments spans residues 182–202 (FAFA…GILG), 208–228 (PYSY…IQFW), 286–306 (VPLF…AFIV), 321–341 (IVSL…TFIY), 379–399 (ALFL…PHYI), 430–450 (IYFL…VPQL), 499–519 (FVLM…APIF), 557–577 (LSLL…FYSS), and 587–607 (VIAA…RMFI).

The protein resides in the membrane. This is an uncharacterized protein from Schizosaccharomyces pombe (strain 972 / ATCC 24843) (Fission yeast).